A 215-amino-acid chain; its full sequence is MYFHALIPFKPVNPKTRLSCILNQEEREAFARAMLEDVIAAVQKSGCSATLLCTHSFKHENALVAVRTEPLNDAINWALGQFHCPALIIMGDIPLVTAGDIQRLIRTEKDMSIVPGRGGGTNIIFLKKPRCFRADYYGASFLDHMRIAEECGFSVEVIDSFRMSTDIDEKEDLVEILIHGKGRRSREYLENSGFSIALDEKGRVGVQRDPHEEAL.

The protein belongs to the CofC family. As to quaternary structure, homodimer.

The enzyme catalyses (2S)-2-phospholactate + GTP + H(+) = (2S)-lactyl-2-diphospho-5'-guanosine + diphosphate. It participates in cofactor biosynthesis; coenzyme F420 biosynthesis. Guanylyltransferase that catalyzes the activation of (2S)-2-phospholactate (2-PL) as (2S)-lactyl-2-diphospho-5'-guanosine, via the condensation of 2-PL with GTP. It is involved in the biosynthesis of coenzyme F420, a hydride carrier cofactor. The polypeptide is 2-phospho-L-lactate guanylyltransferase (Methanoculleus marisnigri (strain ATCC 35101 / DSM 1498 / JR1)).